Consider the following 548-residue polypeptide: Malate:quinone oxidoreductase (548 aa).

The tract at residues 521–548 (DKPQAADSTPKPQLKPQPVQKEVADIAL) is disordered. Low complexity predominate over residues 530 to 541 (PKPQLKPQPVQK).

This sequence belongs to the MQO family. FAD is required as a cofactor.

The catalysed reaction is (S)-malate + a quinone = a quinol + oxaloacetate. It functions in the pathway carbohydrate metabolism; tricarboxylic acid cycle; oxaloacetate from (S)-malate (quinone route): step 1/1. The sequence is that of Malate:quinone oxidoreductase (mqo) from Escherichia coli (strain K12).